The primary structure comprises 534 residues: Solute carrier family 22 member 15 (534 aa).

A helical transmembrane segment spans residues 22–42 (FLLAVLLQLYSATEAIIITIL). N-linked (GlcNAc...) asparagine glycans are attached at residues Asn52, Asn58, and Asn83. Helical transmembrane passes span 97 to 117 (AAYE…IGVI), 136 to 156 (LALE…PLFL), 161 to 181 (LVGV…NECI), 191 to 211 (SLGS…GYFI), 216 to 236 (LLAL…LCIP), 297 to 317 (TLIM…LTLS), 327 to 347 (LNLA…MYLI), 356 to 376 (GSLA…MLVP), 391 to 411 (TLSL…YIYS), 424 to 444 (MGVC…IPAL), and 450 to 470 (ALPF…SLLL). Asn513 carries an N-linked (GlcNAc...) asparagine glycan.

It belongs to the major facilitator (TC 2.A.1) superfamily. Organic cation transporter (TC 2.A.1.19) family.

It is found in the membrane. Functionally, probably transports organic cations. This chain is Solute carrier family 22 member 15 (slc22a15), found in Xenopus tropicalis (Western clawed frog).